The sequence spans 246 residues: Ribonuclease PH (246 aa).

Phosphate contacts are provided by residues Arg-86 and 124-126 (GTR).

Belongs to the RNase PH family. Homohexameric ring arranged as a trimer of dimers.

The enzyme catalyses tRNA(n+1) + phosphate = tRNA(n) + a ribonucleoside 5'-diphosphate. Its function is as follows. Phosphorolytic 3'-5' exoribonuclease that plays an important role in tRNA 3'-end maturation. Removes nucleotide residues following the 3'-CCA terminus of tRNAs; can also add nucleotides to the ends of RNA molecules by using nucleoside diphosphates as substrates, but this may not be physiologically important. Probably plays a role in initiation of 16S rRNA degradation (leading to ribosome degradation) during starvation. The chain is Ribonuclease PH from Bacillus licheniformis (strain ATCC 14580 / DSM 13 / JCM 2505 / CCUG 7422 / NBRC 12200 / NCIMB 9375 / NCTC 10341 / NRRL NRS-1264 / Gibson 46).